The chain runs to 33 residues: Sucrose-6-phosphate hydrolase (33 aa).

15 to 18 (PLQE) lines the substrate pocket. Glu18 is a catalytic residue.

Belongs to the glycosyl hydrolase 32 family.

It catalyses the reaction Hydrolysis of terminal non-reducing beta-D-fructofuranoside residues in beta-D-fructofuranosides.. It participates in glycan biosynthesis; sucrose metabolism. This is Sucrose-6-phosphate hydrolase from Fusobacterium mortiferum.